Here is a 175-residue protein sequence, read N- to C-terminus: MASSSISFSCAPSLATSLFSTTSSSPRLLSSRFLGTRNLKLRIRPARLGPSNGSRTTCWFKFGKNGVDAENAGIYGSQSRDDFDRDDVEQYFNYMGMLAVEGTYSKMEALLNLNIHPVDILLMLAATEGDRPKIEELLKAGADYSVKDADGRTAIDRANSEEIRDLILGYSTQKA.

A chloroplast-targeting transit peptide spans 1–68 (MASSSISFSC…WFKFGKNGVD (68 aa)). The stretch at 117 to 149 (PVDILLMLAATEGDRPKIEELLKAGADYSVKDA) is one ANK repeat.

As to quaternary structure, interacts with CAO/cpSRP43, but is not a component of the transit complex. Interacts with LHCP (via T14 domain), TIC40 and TIC110. Highly expressed in leaves and seedlings. Detected in roots, but not in germinating seeds.

The protein resides in the plastid. It is found in the chloroplast thylakoid membrane. It localises to the chloroplast envelope. Its subcellular location is the chloroplast stroma. Its function is as follows. Involved in the import of light-harvesting complex proteins (LHCP) and subsequent routing of these proteins to the chloroplast signal recognition particle (SRP) pathway. This chain is Protein LHCP TRANSLOCATION DEFECT (LTD), found in Arabidopsis thaliana (Mouse-ear cress).